The sequence spans 197 residues: FMN-dependent NADH:quinone oxidoreductase 1 (197 aa).

FMN is bound by residues serine 10, 16 to 18 (SQS), 93 to 96 (MYNF), and 137 to 140 (TRGG).

The protein belongs to the azoreductase type 1 family. In terms of assembly, homodimer. Requires FMN as cofactor.

It catalyses the reaction 2 a quinone + NADH + H(+) = 2 a 1,4-benzosemiquinone + NAD(+). The catalysed reaction is N,N-dimethyl-1,4-phenylenediamine + anthranilate + 2 NAD(+) = 2-(4-dimethylaminophenyl)diazenylbenzoate + 2 NADH + 2 H(+). In terms of biological role, quinone reductase that provides resistance to thiol-specific stress caused by electrophilic quinones. Its function is as follows. Also exhibits azoreductase activity. Catalyzes the reductive cleavage of the azo bond in aromatic azo compounds to the corresponding amines. In Photobacterium profundum (strain SS9), this protein is FMN-dependent NADH:quinone oxidoreductase 1.